The sequence spans 308 residues: GMP synthase [glutamine-hydrolyzing] subunit B (308 aa).

The GMPS ATP-PPase domain occupies 1–185 (MNWEKFVEEK…LGLPEKIYNR (185 aa)). An ATP-binding site is contributed by 28-34 (SGGVDSS).

As to quaternary structure, heterodimer composed of a glutamine amidotransferase subunit (A) and a GMP-binding subunit (B).

It catalyses the reaction XMP + L-glutamine + ATP + H2O = GMP + L-glutamate + AMP + diphosphate + 2 H(+). It functions in the pathway purine metabolism; GMP biosynthesis; GMP from XMP (L-Gln route): step 1/1. Its function is as follows. Catalyzes the synthesis of GMP from XMP. The chain is GMP synthase [glutamine-hydrolyzing] subunit B (guaAB) from Pyrococcus abyssi (strain GE5 / Orsay).